We begin with the raw amino-acid sequence, 842 residues long: 9-beta-pimara-7,15-diene synthase, chloroplastic (842 aa).

The N-terminal 56 residues, 1–56, are a transit peptide targeting the chloroplast; sequence MASPMEAVARSSLVLAPRRRRALGLLPAAAAAAPFVLDCRRRHNGGMRRPHVSFAC. Residues aspartate 591, aspartate 595, asparagine 735, serine 739, and glutamate 743 each coordinate Mg(2+). The DDXXD motif motif lies at 591 to 595; it reads DDFFD.

Belongs to the terpene synthase family. Mg(2+) serves as cofactor. As to expression, expressed in roots.

It localises to the plastid. The protein resides in the chloroplast. The catalysed reaction is 9alpha-copalyl diphosphate = 9beta-pimara-7,15-diene + diphosphate. Involved in the biosynthesis of momilactone A and B phytoalexins. Catalyzes the conversion of syn-copalyl diphosphate to the phytoalexin precursor syn-pimara-7,15-diene. The protein is 9-beta-pimara-7,15-diene synthase, chloroplastic of Oryza sativa subsp. japonica (Rice).